A 1393-amino-acid polypeptide reads, in one-letter code: DNA-directed RNA polymerase subunit beta' (1393 aa).

Positions 72, 74, 87, and 90 each coordinate Zn(2+). Mg(2+) is bound by residues Asp-463, Asp-465, and Asp-467. Zn(2+)-binding residues include Cys-812, Cys-887, Cys-894, and Cys-897.

It belongs to the RNA polymerase beta' chain family. In terms of assembly, the RNAP catalytic core consists of 2 alpha, 1 beta, 1 beta' and 1 omega subunit. When a sigma factor is associated with the core the holoenzyme is formed, which can initiate transcription. Requires Mg(2+) as cofactor. Zn(2+) is required as a cofactor.

It catalyses the reaction RNA(n) + a ribonucleoside 5'-triphosphate = RNA(n+1) + diphosphate. DNA-dependent RNA polymerase catalyzes the transcription of DNA into RNA using the four ribonucleoside triphosphates as substrates. This chain is DNA-directed RNA polymerase subunit beta', found in Chlamydia caviae (strain ATCC VR-813 / DSM 19441 / 03DC25 / GPIC) (Chlamydophila caviae).